The chain runs to 434 residues: MGLARALRRLSGALEPGNSRAGDEEEAGAGLCRNGWAPGPVAGSRRRGRFVKKDGHCNVRFVNLGGQGARYLSDLFTTCVDVRWRWMCLLFSCSFLASWLLFGLTFWLIASLHGDLAAPPPPAPCFSQVASFLAAFLFALETQTSIGYGVRSVTEECPAAVAAVVLQCIAGCVLDAFVVGAVMAKMAKPKKRNETLVFSENAVVALRDHRLCLMWRVGNLRRSHLVEAHVRAQLLQPRVTPEGEYIPLDHQDVDVGFDGGTDRIFLVSPITIVHEIDSASPLYELGRAELARADFELVVILEGMVEATAMTTQCRSSYLPGELLWGHRFEPVLFQRGSQYEVDYRHFHRTYEVPGTPVCSAKELDERAEQASHSPKSSFPGSLTAFCYENELALSCCQEEDEEEDTKEGTSAETPERAASPQALTPTLALTLPP.

Residues 1–81 lie on the Cytoplasmic side of the membrane; that stretch reads MGLARALRRL…LSDLFTTCVD (81 aa). S-nitrosocysteine is present on Cys79. A helical membrane pass occupies residues 82–108; the sequence is VRWRWMCLLFSCSFLASWLLFGLTFWL. The Extracellular segment spans residues 109–131; sequence IASLHGDLAAPPPPAPCFSQVAS. The helical; Pore-forming intramembrane region spans 132–148; that stretch reads FLAAFLFALETQTSIGY. Residues 145 to 150 carry the Selectivity filter motif; the sequence is SIGYGV. At 149-157 the chain is on the extracellular side; it reads GVRSVTEEC. A helical membrane pass occupies residues 158-185; it reads PAAVAAVVLQCIAGCVLDAFVVGAVMAK. At 186 to 434 the chain is on the cytoplasmic side; it reads MAKPKKRNET…TPTLALTLPP (249 aa). The segment at 398 to 434 is disordered; sequence QEEDEEEDTKEGTSAETPERAASPQALTPTLALTLPP. Basic and acidic residues predominate over residues 407-416; sequence KEGTSAETPE. Over residues 418 to 434 the composition is skewed to low complexity; that stretch reads AASPQALTPTLALTLPP.

The protein belongs to the inward rectifier-type potassium channel (TC 1.A.2.1) family. KCNJ14 subfamily.

It localises to the membrane. It carries out the reaction K(+)(in) = K(+)(out). Its activity is regulated as follows. Channel activity is regulated by variations of cytosolic pH; channels are activated by alkaline and inhibited by acidic pH values. Inhibited by Ba(2+) and Cs(+) in a voltage-dependent manner; sensitivity to those inhibitors is lower than in other Kir channels. Its function is as follows. Inward rectifier potassium channels are characterized by a greater tendency to allow potassium to flow into the cell rather than out of it. Their voltage dependence is regulated by the concentration of extracellular potassium; as external potassium is raised, the voltage range of the channel opening shifts to more positive voltages. The chain is ATP-sensitive inward rectifier potassium channel 14 (Kcnj14) from Mus musculus (Mouse).